A 153-amino-acid polypeptide reads, in one-letter code: 3-hydroxyacyl-[acyl-carrier-protein] dehydratase FabZ (153 aa).

His57 is a catalytic residue.

The protein belongs to the thioester dehydratase family. FabZ subfamily.

It localises to the cytoplasm. It carries out the reaction a (3R)-hydroxyacyl-[ACP] = a (2E)-enoyl-[ACP] + H2O. Functionally, involved in unsaturated fatty acids biosynthesis. Catalyzes the dehydration of short chain beta-hydroxyacyl-ACPs and long chain saturated and unsaturated beta-hydroxyacyl-ACPs. This Xanthomonas oryzae pv. oryzae (strain MAFF 311018) protein is 3-hydroxyacyl-[acyl-carrier-protein] dehydratase FabZ.